A 714-amino-acid polypeptide reads, in one-letter code: DNA gyrase subunit B (714 aa).

The Toprim domain maps to 492–606 (SELYVVEGDS…NGHVFLAQPP (115 aa)). 3 residues coordinate Mg(2+): Glu-498, Asp-571, and Asp-573.

The protein belongs to the type II topoisomerase GyrB family. Heterotetramer, composed of two GyrA and two GyrB chains. In the heterotetramer, GyrA contains the active site tyrosine that forms a transient covalent intermediate with DNA, while GyrB binds cofactors and catalyzes ATP hydrolysis. Requires Mg(2+) as cofactor. It depends on Mn(2+) as a cofactor. The cofactor is Ca(2+).

Its subcellular location is the cytoplasm. The catalysed reaction is ATP-dependent breakage, passage and rejoining of double-stranded DNA.. DNA supercoiling is inhibited by EDTA, novobiocin, coumermycin and ciprofloxacin. Functionally, a type II topoisomerase that negatively supercoils closed circular double-stranded DNA in an ATP-dependent manner and also catalyzes the interconversion of other topological isomers of double-stranded DNA rings, including catenanes and knotted rings. Relaxes negatively supercoiled DNA in an ATP-independent manner. A linear reaction intermediate can be trapped in the presence of the antibiotic ciprofloxacin. Negative supercoiling favors strand separation, and DNA replication, transcription, recombination and repair, all of which involve strand separation. Type II topoisomerases break and join 2 DNA strands simultaneously in an ATP-dependent manner. The sequence is that of DNA gyrase subunit B from Mycobacterium bovis (strain BCG / Pasteur 1173P2).